The sequence spans 351 residues: tRNA-specific 2-thiouridylase MnmA (351 aa).

Residues 7-14 and Leu-33 contribute to the ATP site; that span reads GLSGGVDS. Cys-94 (nucleophile) is an active-site residue. A disulfide bridge links Cys-94 with Cys-193. ATP is bound at residue Gly-119. The interaction with tRNA stretch occupies residues 143–145; it reads KDQ. The active-site Cysteine persulfide intermediate is the Cys-193. The segment at 298 to 299 is interaction with tRNA; that stretch reads RY.

The protein belongs to the MnmA/TRMU family.

Its subcellular location is the cytoplasm. The catalysed reaction is S-sulfanyl-L-cysteinyl-[protein] + uridine(34) in tRNA + AH2 + ATP = 2-thiouridine(34) in tRNA + L-cysteinyl-[protein] + A + AMP + diphosphate + H(+). Its function is as follows. Catalyzes the 2-thiolation of uridine at the wobble position (U34) of tRNA, leading to the formation of s(2)U34. The polypeptide is tRNA-specific 2-thiouridylase MnmA (Nostoc punctiforme (strain ATCC 29133 / PCC 73102)).